A 656-amino-acid polypeptide reads, in one-letter code: Ankyrin repeat and SAM domain-containing protein 3 (656 aa).

The segment at 1–422 is interaction with NEK7; the sequence is MSELSDEASE…AESSPQTQRA (422 aa). 2 positions are modified to phosphoserine: S2 and S5. 6 ANK repeats span residues 34–64, 68–97, 101–130, 134–163, 168–197, and 201–220; these read DVPL…DLNK, GGWT…SVNV, EGQT…ELEM, QGWT…NANV, CGFT…KVDA, and SGAT…IVAL. N96 bears the 3-hydroxyasparagine mark. Phosphoserine is present on residues S201, S225, S243, S244, and S245. Disordered regions lie at residues 235-265 and 277-312; these read SPEK…GVSI and GIGL…EEEG. At T319 the chain carries Phosphothreonine. A phosphoserine mark is found at S320, S368, S371, and S375. The tract at residues 346 to 425 is disordered; sequence GPVQSSSSSE…SPQTQRAPYS (80 aa). The SAM domain occupies 425-488; the sequence is SGPQDLAALL…TSAIARWHSS (64 aa). Residues 501-526 adopt a coiled-coil conformation; the sequence is ADRLEAEMQELAIQLHKRCEEVEATR. Position 541 is a phosphoserine (S541).

In terms of assembly, homooligomer. Interacts (via SAM domain) with ANKS6 (via SAM domain). Interacts with BICC1. Interacts with NPHP1. Interacts with NEK8. Interacts with HIF1AN. Interacts with NEK7; this interaction alters the subcellular distribution of NEK7 by preventing its nuclear translocation. Hydroxylated at Asn-96, most probably by HIF1AN. In terms of processing, phosphorylations at Ser-5, Ser-225, Thr-319, Ser-320, Ser-368 and Ser-371 occur in a NEK7-dependent manner. Post-translationally, polyubiquitinated.

Its subcellular location is the cell projection. The protein localises to the cilium. The protein resides in the cytoplasm. Functionally, may be involved in vasopressin signaling in the kidney. The polypeptide is Ankyrin repeat and SAM domain-containing protein 3 (ANKS3) (Homo sapiens (Human)).